Reading from the N-terminus, the 380-residue chain is TPR repeat-containing thioredoxin TDX (380 aa).

Residue Val2 is modified to N-acetylvaline. The segment covering 49 to 59 (TERDYEDKAET) has biased composition (basic and acidic residues). The interval 49-115 (TERDYEDKAE…DENRDDAQSE (67 aa)) is disordered. Residues 69–91 (DDDDDIMESDVELDNSDVVEPDN) show a composition bias toward acidic residues. Positions 106–115 (DENRDDAQSE) are enriched in basic and acidic residues. 3 TPR repeats span residues 112-145 (AQSE…NPTS), 147-179 (ILYA…NSDS), and 181-213 (KGYK…DYDE). A compositionally biased stretch (basic and acidic residues) spans 240-263 (RKEKELQRAERERRKQQEAQEREA). Positions 240-265 (RKEKELQRAERERRKQQEAQEREAQA) are disordered. In terms of domain architecture, Thioredoxin spans 252–378 (RRKQQEAQER…LEQKIAQHSS (127 aa)). Catalysis depends on nucleophile residues Cys304 and Cys307. The cysteines at positions 304 and 307 are disulfide-linked.

Belongs to the thioredoxin family. Oligomerization under high temperature.

Functionally, thiol-disulfide oxidoreductase that possesses insulin disulfide bonds reducing activity, disulfide reductase, foldase chaperone and holdase chaperone activities. Heat shock causes oligomerization and formation of high molecular weiht (HMW) complexes with concomitant functional switching from a disulfide reductase and foldase chaperone to a holdase chaperone. May interact with HSP70 proteins through the TPR repeats. This Arabidopsis thaliana (Mouse-ear cress) protein is TPR repeat-containing thioredoxin TDX (TDX).